The chain runs to 180 residues: Molybdopterin synthase catalytic subunit (180 aa).

Residues 1–10 (MSSTTPTTEP) show a composition bias toward polar residues. The interval 1–31 (MSSTTPTTEPDQLPPHLDPQTYPRTTTNPTL) is disordered. The span at 21–31 (TYPRTTTNPTL) shows a compositional bias: low complexity. Substrate-binding positions include 131-132 (HR), lysine 147, and 154-156 (KKE).

It belongs to the MoaE family. MOCS2B subfamily. In terms of assembly, heterotetramer; composed of 2 small (MOCS2A) and 2 large (MOCS2B) subunits.

Its subcellular location is the cytoplasm. It carries out the reaction 2 [molybdopterin-synthase sulfur-carrier protein]-C-terminal-Gly-aminoethanethioate + cyclic pyranopterin phosphate + H2O = molybdopterin + 2 [molybdopterin-synthase sulfur-carrier protein]-C-terminal Gly-Gly + 2 H(+). It functions in the pathway cofactor biosynthesis; molybdopterin biosynthesis. Catalytic subunit of the molybdopterin synthase complex, a complex that catalyzes the conversion of precursor Z into molybdopterin. Acts by mediating the incorporation of 2 sulfur atoms from thiocarboxylated MOCS2A into precursor Z to generate a dithiolene group. The polypeptide is Molybdopterin synthase catalytic subunit (Aspergillus niger (strain ATCC MYA-4892 / CBS 513.88 / FGSC A1513)).